The sequence spans 126 residues: LFVGLTSAKYHDVCQLPRDPGPCRAYIPLYYFNSRTCLCEKFVYGGCQGNANRFDTVEDCRRRCGGGDLCSLPRDSGPCEAAIPRWWYNKRTNRCQRFTYGGCEGNANNFKTLDECRFQCRKRSTY.

BPTI/Kunitz inhibitor domains follow at residues 14 to 64 (CQLP…RRRC) and 70 to 120 (CSLP…RFQC). 6 cysteine pairs are disulfide-bonded: C14–C64, C23–C47, C39–C60, C70–C120, C79–C103, and C95–C116.

In terms of tissue distribution, component of the acid-soluble and acid-insoluble organic matrix of calcified shell layers (at protein level).

It localises to the secreted. Serine protease inhibitor. The sequence is that of BPTI/Kunitz domain-containing protein from Haliotis asinina (Donkey's ear abalone).